The sequence spans 104 residues: uncharacterized protein (104 aa).

Residues 81 to 97 traverse the membrane as a helical segment; the sequence is CLLMLPCISVVMSISSV.

The protein resides in the cell membrane. This is an uncharacterized protein from Bacillus subtilis (strain 168).